The primary structure comprises 578 residues: A-type ATP synthase subunit A (578 aa).

228–235 (GPFGSGKT) is an ATP binding site.

The protein belongs to the ATPase alpha/beta chains family. Has multiple subunits with at least A(3), B(3), C, D, E, F, G, I and proteolipid K(x).

It is found in the cell membrane. The enzyme catalyses ATP + H2O + 4 H(+)(in) = ADP + phosphate + 5 H(+)(out). Its activity is regulated as follows. ATP hydrolysis stimulated by sulfite, ethanol, glycerol, magnesium and zinc ions, inhibited by diethylstilbestrol (DES) and less well by N,N-dicyclohexylcarbodiimide (DCCD). Functionally, component of the A-type ATP synthase that produces ATP from ADP in the presence of a proton gradient across the membrane. The A chain is the catalytic subunit. The sequence is that of A-type ATP synthase subunit A from Methanosarcina mazei (strain ATCC BAA-159 / DSM 3647 / Goe1 / Go1 / JCM 11833 / OCM 88) (Methanosarcina frisia).